A 380-amino-acid chain; its full sequence is Glutamate 5-kinase (380 aa).

ATP is bound at residue Lys15. Ser59, Asp146, and Asn158 together coordinate substrate. Residue 178-179 (TD) coordinates ATP. A PUA domain is found at 285–363 (RGSVTVDAGA…AEFERLLGYA (79 aa)).

It belongs to the glutamate 5-kinase family.

Its subcellular location is the cytoplasm. It carries out the reaction L-glutamate + ATP = L-glutamyl 5-phosphate + ADP. Its pathway is amino-acid biosynthesis; L-proline biosynthesis; L-glutamate 5-semialdehyde from L-glutamate: step 1/2. Catalyzes the transfer of a phosphate group to glutamate to form L-glutamate 5-phosphate. The polypeptide is Glutamate 5-kinase (Acidovorax ebreus (strain TPSY) (Diaphorobacter sp. (strain TPSY))).